The chain runs to 416 residues: Thyroid hormone receptor alpha-A (416 aa).

The segment covering 1 to 13 (MEPMSNKQDSNSS) has biased composition (polar residues). Positions 1 to 37 (MEPMSNKQDSNSSEGDEKGWPDVPKRKRKNSQCSMKS) are disordered. Residues 1-58 (MEPMSNKQDSNSSEGDEKGWPDVPKRKRKNSQCSMKSMSALSVSVPGYIPSYLEKDEP) are modulating. Residues 15–24 (GDEKGWPDVP) are compositionally biased toward basic and acidic residues. NR C4-type zinc fingers lie at residues 59-79 (CVVC…CEGC) and 97-121 (CKYE…FKKC). The nuclear receptor DNA-binding region spans 59–126 (CVVCGDKATG…RFKKCISVGM (68 aa)). An NR LBD domain is found at 169 to 413 (AEWELIRMAT…PPLFLEVFED (245 aa)).

The protein belongs to the nuclear hormone receptor family. NR1 subfamily.

It localises to the nucleus. High affinity receptor for triiodothyronine. This is Thyroid hormone receptor alpha-A (thra1) from Paralichthys olivaceus (Bastard halibut).